The primary structure comprises 217 residues: Ribosomal RNA small subunit methyltransferase G (217 aa).

S-adenosyl-L-methionine is bound by residues Gly79, Leu84, 130–131 (IE), and Arg145.

The protein belongs to the methyltransferase superfamily. RNA methyltransferase RsmG family.

Its subcellular location is the cytoplasm. It catalyses the reaction guanosine(527) in 16S rRNA + S-adenosyl-L-methionine = N(7)-methylguanosine(527) in 16S rRNA + S-adenosyl-L-homocysteine. Functionally, specifically methylates the N7 position of guanine in position 527 of 16S rRNA. The sequence is that of Ribosomal RNA small subunit methyltransferase G from Hahella chejuensis (strain KCTC 2396).